A 90-amino-acid polypeptide reads, in one-letter code: NELL2-interacting cell ontogeny regulator 1 (90 aa).

Positions Met1–Ala28 are cleaved as a signal peptide.

It belongs to the NICOL family. In terms of assembly, interacts with NELL2; triggers epididymal differentiation. Interacts with cell surface receptor TFRC; the interaction mediates uptake of NICOL1 into fibroblasts. Expression is enriched in both male and female reproductive organs, including the testis, epididymis, seminal vesicles, coagulating glands, ovary and uterus, and in various non-reproductive organs such as brain, thymus and liver. In testis, expressed in both germ cells and Sertoli cells. Also expressed at low levels in the kidney. Expressed during neocortex and cerebellum development.

The protein resides in the secreted. It localises to the cytoplasm. Its subcellular location is the perinuclear region. MRNA-binding protein which interacts with a range of target mRNAs including SERPINE1, ACTA2, CCN2 and COL4A1 and may promote extracellular matrix production. Binds to the 3'-UTR of SERPINE1 mRNA and stabilizes the mRNA, possibly by competing for binding with SERBP1 and preventing SERBP1-mediated mRNA degradation. Also binds to the 3'-UTR of ACTA2. Testis-derived lumicrine factor that triggers epididymal differentiation and sperm maturation. The protein is NELL2-interacting cell ontogeny regulator 1 of Mus musculus (Mouse).